Reading from the N-terminus, the 183-residue chain is Capsid protein (183 aa).

The interval 143 to 183 (LPENAVVRRRGRSPRRRTPSPRRRRSQSPRRRRSQSRGSQC) is disordered. Basic residues predominate over residues 149 to 177 (VRRRGRSPRRRTPSPRRRRSQSPRRRRSQ). Residues Ser155, Ser162, and Ser170 each carry the phosphoserine; by host modification. The 1; half-length repeat unit spans residues 155–161 (SPRRRTP). The interval 155–177 (SPRRRTPSPRRRRSQSPRRRRSQ) is 3 X 8 AA repeats of S-P-R-R-R-[PR]-S-Q. A Bipartite nuclear localization signal motif is present at residues 158–175 (RRTPSPRRRRSQSPRRRR). Tandem repeats lie at residues 162–169 (SPRRRRSQ) and 170–177 (SPRRRRSQ). Positions 177 to 183 (QSRGSQC) are RNA binding.

It belongs to the orthohepadnavirus core antigen family. Homodimerizes, then multimerizes. Interacts with cytosol exposed regions of viral L glycoprotein present in the reticulum-to-Golgi compartment. Interacts with human FLNB. Phosphorylated form interacts with host importin alpha; this interaction depends on the exposure of the NLS, which itself depends upon genome maturation and/or phosphorylation of the capsid protein. Interacts with host NUP153. In terms of processing, phosphorylated by host SRPK1, SRPK2, and maybe protein kinase C or GAPDH. Phosphorylation is critical for pregenomic RNA packaging. Protein kinase C phosphorylation is stimulated by HBx protein and may play a role in transport of the viral genome to the nucleus at the late step during the viral replication cycle.

The protein resides in the virion. It is found in the host cytoplasm. In terms of biological role, self assembles to form an icosahedral capsid. Most capsids appear to be large particles with an icosahedral symmetry of T=4 and consist of 240 copies of capsid protein, though a fraction forms smaller T=3 particles consisting of 180 capsid proteins. Entering capsids are transported along microtubules to the nucleus. Phosphorylation of the capsid is thought to induce exposure of nuclear localization signal in the C-terminal portion of the capsid protein that allows binding to the nuclear pore complex via the importin (karyopherin-) alpha and beta. Capsids are imported in intact form through the nuclear pore into the nuclear basket, where it probably binds NUP153. Only capsids that contain the mature viral genome can release the viral DNA and capsid protein into the nucleoplasm. Immature capsids get stuck in the basket. Capsids encapsulate the pre-genomic RNA and the P protein. Pre-genomic RNA is reverse-transcribed into DNA while the capsid is still in the cytoplasm. The capsid can then either be directed to the nucleus, providing more genomes for transcription, or bud through the endoplasmic reticulum to provide new virions. This is Capsid protein from Homo sapiens (Human).